A 58-amino-acid polypeptide reads, in one-letter code: Small ribosomal subunit protein bS21 (58 aa).

The disordered stretch occupies residues 31 to 58 (DLKRIRHHETPVEKYKRKAQQRRRSRRR). Residues 45-58 (YKRKAQQRRRSRRR) are compositionally biased toward basic residues.

Belongs to the bacterial ribosomal protein bS21 family.

The protein is Small ribosomal subunit protein bS21 of Prochlorococcus marinus (strain MIT 9303).